Consider the following 299-residue polypeptide: Elongation factor Ts (299 aa).

Residues 81–84 are involved in Mg(2+) ion dislocation from EF-Tu; it reads TDFV.

This sequence belongs to the EF-Ts family.

Its subcellular location is the cytoplasm. In terms of biological role, associates with the EF-Tu.GDP complex and induces the exchange of GDP to GTP. It remains bound to the aminoacyl-tRNA.EF-Tu.GTP complex up to the GTP hydrolysis stage on the ribosome. The protein is Elongation factor Ts of Halothermothrix orenii (strain H 168 / OCM 544 / DSM 9562).